The chain runs to 262 residues: Acyl-[acyl-carrier-protein]--UDP-N-acetylglucosamine O-acyltransferase (262 aa).

It belongs to the transferase hexapeptide repeat family. LpxA subfamily. In terms of assembly, homotrimer.

It is found in the cytoplasm. It catalyses the reaction a (3R)-hydroxyacyl-[ACP] + UDP-N-acetyl-alpha-D-glucosamine = a UDP-3-O-[(3R)-3-hydroxyacyl]-N-acetyl-alpha-D-glucosamine + holo-[ACP]. The protein operates within glycolipid biosynthesis; lipid IV(A) biosynthesis; lipid IV(A) from (3R)-3-hydroxytetradecanoyl-[acyl-carrier-protein] and UDP-N-acetyl-alpha-D-glucosamine: step 1/6. Its function is as follows. Involved in the biosynthesis of lipid A, a phosphorylated glycolipid that anchors the lipopolysaccharide to the outer membrane of the cell. In Cronobacter sakazakii (strain ATCC BAA-894) (Enterobacter sakazakii), this protein is Acyl-[acyl-carrier-protein]--UDP-N-acetylglucosamine O-acyltransferase.